Reading from the N-terminus, the 485-residue chain is NADH-quinone oxidoreductase subunit N (485 aa).

14 helical membrane-spanning segments follow: residues 8–28 (LIALLPLLIVGLTVVVVMLSI), 35–55 (FLNATLSVIGLNAALVSLWFV), 71–91 (GFAMLYTGLVQVASLATCTFA), 105–125 (FYLLVLIASLGGILLANANHL), 127–147 (ALFLGIELISLPLFGLIGYAF), 159–179 (YTILSAAASSFLLFGMALVYA), 203–223 (LLAGFGLMIVGLGFKLSLVPF), 235–255 (PAPVSTFLATASKIAIFGVVM), 271–291 (VVLGIIAFASIIFGNLMALSQ), 297–317 (LLGYSSISHLGYLLVALIALQ), 326–346 (VGVYLAGYLFSSLGAFGVVSL), 373–393 (AAVMTVMMLSLAGIPMTLGFI), 408–430 (WWLVAAVVVGSAIGLYYYLRVAV), and 455–475 (IVVLISALLVLVLGVWPQPLI).

The protein belongs to the complex I subunit 2 family. NDH-1 is composed of 13 different subunits. Subunits NuoA, H, J, K, L, M, N constitute the membrane sector of the complex.

The protein resides in the cell inner membrane. It carries out the reaction a quinone + NADH + 5 H(+)(in) = a quinol + NAD(+) + 4 H(+)(out). NDH-1 shuttles electrons from NADH, via FMN and iron-sulfur (Fe-S) centers, to quinones in the respiratory chain. The immediate electron acceptor for the enzyme in this species is believed to be ubiquinone. Couples the redox reaction to proton translocation (for every two electrons transferred, four hydrogen ions are translocated across the cytoplasmic membrane), and thus conserves the redox energy in a proton gradient. The polypeptide is NADH-quinone oxidoreductase subunit N (Salmonella gallinarum (strain 287/91 / NCTC 13346)).